The following is a 256-amino-acid chain: Thiazole synthase (256 aa).

Lysine 95 (schiff-base intermediate with DXP) is an active-site residue. Residues glycine 156, 182–183 (AG), and 204–205 (NT) each bind 1-deoxy-D-xylulose 5-phosphate.

The protein belongs to the ThiG family. As to quaternary structure, homotetramer. Forms heterodimers with either ThiH or ThiS.

It is found in the cytoplasm. The enzyme catalyses [ThiS sulfur-carrier protein]-C-terminal-Gly-aminoethanethioate + 2-iminoacetate + 1-deoxy-D-xylulose 5-phosphate = [ThiS sulfur-carrier protein]-C-terminal Gly-Gly + 2-[(2R,5Z)-2-carboxy-4-methylthiazol-5(2H)-ylidene]ethyl phosphate + 2 H2O + H(+). Its pathway is cofactor biosynthesis; thiamine diphosphate biosynthesis. Its function is as follows. Catalyzes the rearrangement of 1-deoxy-D-xylulose 5-phosphate (DXP) to produce the thiazole phosphate moiety of thiamine. Sulfur is provided by the thiocarboxylate moiety of the carrier protein ThiS. In vitro, sulfur can be provided by H(2)S. In Escherichia coli O45:K1 (strain S88 / ExPEC), this protein is Thiazole synthase.